A 269-amino-acid chain; its full sequence is Cleavage and polyadenylation specificity factor subunit 4 (269 aa).

5 C3H1-type zinc fingers span residues 35-61 (KSGA…RHIS), 62-89 (GEKT…HEYD), 90-117 (MTKM…HIDP), 118-142 (ESKI…RHRH), and 143-169 (TRRV…HPRF). The disordered stretch occupies residues 173–199 (MGTTEQPPLPQQTQPPAKQSNNPPLQR). Phosphoserine is present on residues Ser-200, Ser-202, and Ser-212. The segment at 243–260 (VTCYKCGEKGHYANRCTK) adopts a CCHC-type zinc-finger fold. A Phosphoserine modification is found at Ser-267.

The protein belongs to the CPSF4/YTH1 family. In terms of assembly, component of the cleavage and polyadenylation specificity factor (CPSF) complex, composed of CPSF1, CPSF2, CPSF3, CPSF4 and FIP1L1. Interacts with FIP1L1. As to quaternary structure, (Microbial infection) Interacts with influenza A virus NS1 blocks processing of pre-mRNAs, thereby preventing nuclear export of host cell mRNAs.

The protein localises to the nucleus. In terms of biological role, component of the cleavage and polyadenylation specificity factor (CPSF) complex that play a key role in pre-mRNA 3'-end formation, recognizing the AAUAAA signal sequence and interacting with poly(A) polymerase and other factors to bring about cleavage and poly(A) addition. CPSF4 binds RNA polymers with a preference for poly(U). This Homo sapiens (Human) protein is Cleavage and polyadenylation specificity factor subunit 4 (CPSF4).